Reading from the N-terminus, the 422-residue chain is Lactose-binding protein (422 aa).

The signal sequence occupies residues 1–28 (MDYSRLLKRSVSAALTAAALLCSTAAFA). A lactose-binding region spans residues 246–277 (SNDGIRALTSGDVASVLRGVWITGTVKSQPDQ).

The protein belongs to the bacterial solute-binding protein 1 family.

It is found in the periplasm. Part of the binding-protein-dependent transport system for lactose. This is Lactose-binding protein (lacE) from Rhizobium radiobacter (Agrobacterium tumefaciens).